The chain runs to 255 residues: uncharacterized protein (255 aa).

Residues asparagine 16 and asparagine 58 are each glycosylated (N-linked (GlcNAc...) asparagine; by host). The next 2 membrane-spanning stretches (helical) occupy residues 72 to 92 (LIYS…TIYY) and 104 to 124 (LWYI…SHIC).

The protein resides in the membrane. This is an uncharacterized protein from Acanthamoeba polyphaga (Amoeba).